A 98-amino-acid chain; its full sequence is Alpha-defensin 1 (98 aa).

The first 19 residues, Met1 to Thr19, serve as a signal peptide directing secretion. A propeptide spanning residues Gln20–Thr63 is cleaved from the precursor. 3 disulfide bridges follow: Cys66–Cys96, Cys68–Cys84, and Cys74–Cys95.

The protein belongs to the alpha-defensin family. As to expression, paneth cells of the small bowel.

It localises to the secreted. Its function is as follows. Has broad-spectrum antimicrobial properties. The antimicrobial activity decreases in the present of salt in vitro. Binds anionic phospholipids, which leads to the aggregation of liposomes in vitro. Membrane permeabilization of the target cells is an essential part of the peptide's mode of antimicrobial activity. No hemolytic activity against sheep or horse erythrocytes. Has antibacterial activity against the bacterial horse pathogens Gram-positive R.equi ATCC 33701 P(-) (minimum bactericidal concentration or MBC=5 ug/ml) and R.equi ATCC 33701 P(+) (MBC=5 ug/ml), which are resistant against beta-lactam antibiotics. Also has antibacterial activity against highly infectious wild-type strain R.equi 85F P(+) (MBC=5 ug/ml), S.equi subsp. equi (MBC=5 ug/ml), S.equi subsp. zooepidemicus (MBC=5 ug/ml), S.dysgalactiae subsp. equisimilis (MBC=10 ug/ml), S.choleraesuis subsp. choleraesuis serovar Typhimurium (MBC=10 ug/ml), and P.multocida subsp. multocida (MBC=&gt;10 ug/ml). Probably contributes to the antimicrobial barrier function of the small bowel mucosa. This is Alpha-defensin 1 from Equus caballus (Horse).